The sequence spans 501 residues: E3 ubiquitin-protein ligase TRIM35 (501 aa).

M1 carries the post-translational modification N-acetylmethionine. S8 is subject to Phosphoserine. The RING-type zinc finger occupies 21–61 (CAVCYDPFRDAVTLRCGHNFCRRCVSGCWEVQTTPSCPVCK). The segment at 96–137 (RSPRPCRAHRAPLTLFCLEDKELLCCACQADARHQEHRVQPI) adopts a B box-type zinc-finger fold. 4 residues coordinate Zn(2+): C101, H104, C123, and H129. Residues 200-252 (VEEQATLDAMKEESRKKHLQAEEKMKQLAEQTEALAREIERLQMEMKEDDMTF) adopt a coiled-coil conformation. The B30.2/SPRY domain maps to 284 to 495 (LESLQYRVWK…LRICHLRVSI (212 aa)).

Belongs to the TRIM/RBCC family. In terms of assembly, interacts with PKM isoform M2, but not isoform M1; this interaction may compete with that between PKM and FGFR1, and hence reduces FGFR1-dependent tyrosine phosphorylation of PKM. Interacts with IRF7; this interaction promotes IRF7 proteasomal degradation. Interacts with TRAF3; this interaction promotes TRAF3 activation. Widely expressed. Highly expressed in brain, heart, kidney, spleen, skeletal muscle, lung and thymus. Lower expression found in stomach, large intestine and bone marrow.

Its subcellular location is the cytoplasm. It localises to the nucleus. It carries out the reaction S-ubiquitinyl-[E2 ubiquitin-conjugating enzyme]-L-cysteine + [acceptor protein]-L-lysine = [E2 ubiquitin-conjugating enzyme]-L-cysteine + N(6)-ubiquitinyl-[acceptor protein]-L-lysine.. It functions in the pathway protein modification; protein ubiquitination. E3 ubiquitin-protein ligase that participates in multiple biological processes including cell death, glucose metabolism, and in particular, the innate immune response. Mediates 'Lys-63'-linked polyubiquitination of TRAF3 thereby promoting type I interferon production via RIG-I signaling pathway. Can also catalyze 'Lys-48'-linked polyubiquitination and proteasomal degradation of viral proteins such as influenza virus PB2. Acts as a negative feedback regulator of TLR7- and TLR9-triggered signaling. Mechanistically, promotes the 'Lys-48'-linked ubiquitination of IRF7 and induces its degradation via a proteasome-dependent pathway. Reduces FGFR1-dependent tyrosine phosphorylation of PKM, inhibiting PKM-dependent lactate production, glucose metabolism, and cell growth. The protein is E3 ubiquitin-protein ligase TRIM35 (Trim35) of Mus musculus (Mouse).